The chain runs to 326 residues: Glyoxylate/hydroxypyruvate reductase B (326 aa).

Catalysis depends on residues R237 and E266. The Proton donor role is filled by H285.

This sequence belongs to the D-isomer specific 2-hydroxyacid dehydrogenase family. GhrB subfamily. As to quaternary structure, homodimer.

The protein resides in the cytoplasm. The catalysed reaction is glycolate + NADP(+) = glyoxylate + NADPH + H(+). It catalyses the reaction (R)-glycerate + NAD(+) = 3-hydroxypyruvate + NADH + H(+). The enzyme catalyses (R)-glycerate + NADP(+) = 3-hydroxypyruvate + NADPH + H(+). In terms of biological role, catalyzes the NADPH-dependent reduction of glyoxylate and hydroxypyruvate into glycolate and glycerate, respectively. This is Glyoxylate/hydroxypyruvate reductase B from Yersinia pestis bv. Antiqua (strain Nepal516).